The primary structure comprises 477 residues: 3-isopropylmalate dehydratase large subunit (477 aa).

Residues C352, C413, and C416 each contribute to the [4Fe-4S] cluster site.

This sequence belongs to the aconitase/IPM isomerase family. LeuC type 1 subfamily. As to quaternary structure, heterodimer of LeuC and LeuD. Requires [4Fe-4S] cluster as cofactor.

It carries out the reaction (2R,3S)-3-isopropylmalate = (2S)-2-isopropylmalate. The protein operates within amino-acid biosynthesis; L-leucine biosynthesis; L-leucine from 3-methyl-2-oxobutanoate: step 2/4. Its function is as follows. Catalyzes the isomerization between 2-isopropylmalate and 3-isopropylmalate, via the formation of 2-isopropylmaleate. The sequence is that of 3-isopropylmalate dehydratase large subunit from Pseudomonas putida (strain W619).